The sequence spans 190 residues: Transcription antitermination protein NusB (190 aa).

The interval 135 to 190 (APAPESVAEEADEESSDSAAAASEPTDEGDVSDSPDSSGASDEPAAPSAEIQPTVD) is disordered. Positions 141 to 150 (VAEEADEESS) are enriched in acidic residues.

This sequence belongs to the NusB family.

Its function is as follows. Involved in transcription antitermination. Required for transcription of ribosomal RNA (rRNA) genes. Binds specifically to the boxA antiterminator sequence of the ribosomal RNA (rrn) operons. This is Transcription antitermination protein NusB from Bifidobacterium longum (strain DJO10A).